Reading from the N-terminus, the 236-residue chain is Small ribosomal subunit protein uS2c (236 aa).

It belongs to the universal ribosomal protein uS2 family.

The protein localises to the plastid. The protein resides in the chloroplast. In Chaetosphaeridium globosum (Charophycean green alga), this protein is Small ribosomal subunit protein uS2c (rps2).